Consider the following 123-residue polypeptide: Histone H1-like protein HC1 (123 aa).

The interval 54–123 (IKAEKSGLLK…KPSKARGFRK (70 aa)) is disordered. Over residues 61-75 (LLKRKPSTKAPAKVK) the composition is skewed to basic residues. Residues 85 to 102 (KSSAAAAKTSKAVKASKP) show a composition bias toward low complexity. Residues 103-123 (ASKKTAAKKVKKPSKARGFRK) show a composition bias toward basic residues.

This sequence belongs to the histone H1/H5 family. HCT subfamily.

Its function is as follows. Might have a role analogous to that of eukaryotic histone proteins. The sequence is that of Histone H1-like protein HC1 (hctA) from Chlamydia pneumoniae (Chlamydophila pneumoniae).